An 89-amino-acid chain; its full sequence is Small ribosomal subunit protein uS19 (89 aa).

The protein belongs to the universal ribosomal protein uS19 family.

Its function is as follows. Protein S19 forms a complex with S13 that binds strongly to the 16S ribosomal RNA. This Porphyromonas gingivalis (strain ATCC 33277 / DSM 20709 / CIP 103683 / JCM 12257 / NCTC 11834 / 2561) protein is Small ribosomal subunit protein uS19.